The sequence spans 1401 residues: Lysine-specific demethylase 6A (1401 aa).

An interaction with SUPT6H region spans residues 1-1095; the sequence is MKSCGVSLAT…TNIDLSDDKK (1095 aa). TPR repeat units follow at residues 95–128, 132–165, 169–203, 207–240, 245–285, 286–319, 321–353, and 355–387; these read SDFFCQLGHFNLLLEDYPKALSAYQRYYSLQSDY, AAFLYGLGLVYFHYNAFQWAIKAFQEVLYVDPSF, KEIHLRLGLMFKVNTDYESSLKHFQLALVDCNPCT, AEIQFHIAHLYETQRKYHSAKEAYEQLLQTENLS, ATIL…DPNS, GQSWYFLGRCYSSIGKVQDAFISYRQSIDKSEAS, DTWCSIGVLYQQQNQPMDALQAYICAVQLDHGH, and AAWMDLGTLYESCNQPQDAIKCYLNATRSKNCS. Over residues 439-453 the composition is skewed to polar residues; that stretch reads AMNTAQQNTSDNWSG. A disordered region spans residues 439–463; it reads AMNTAQQNTSDNWSGGNAPPPVEQQ. An omega-N-methylarginine mark is found at arginine 519 and arginine 549. 3 stretches are compositionally biased toward polar residues: residues 596–606, 619–642, and 660–743; these read NHVTGSGSNGN, HNRTNLTSSTEEPWKNQLSNSTQG, and LSST…STAS. Positions 596–745 are disordered; it reads NHVTGSGSNG…ETPNSTASVE (150 aa). Position 769 is a phosphoserine (serine 769). Disordered regions lie at residues 795 to 863, 914 to 941, and 1043 to 1080; these read GTCD…EESQ, LLDKCPPPRPPSSPYPPLPKDKLNPPTP, and FQESLREENEKRSHHKDHSDSESTSSDNSGKRRKGPFK. A compositionally biased stretch (low complexity) spans 814 to 833; sequence SVASSPSSAISTATPSPKST. Threonine 827 carries the phosphothreonine modification. Position 829 is a phosphoserine (serine 829). Residues 834–848 are compositionally biased toward polar residues; it reads EQTTTNSVTSLNSPH. Pro residues predominate over residues 918-931; that stretch reads CPPPRPPSSPYPPL. A compositionally biased stretch (basic and acidic residues) spans 1046-1063; the sequence is SLREENEKRSHHKDHSDS. The region spanning 1095–1258 is the JmjC domain; it reads KWKLQLHELT…YKLAVERYEW (164 aa). Positions 1146, 1148, and 1226 each coordinate Fe cation. Residues cysteine 1331, cysteine 1334, cysteine 1358, and cysteine 1361 each contribute to the Zn(2+) site.

It belongs to the UTX family. As to quaternary structure, component of the MLL2/3 complex (also named ASCOM complex), at least composed of KMT2D/MLL2 or KMT2C/MLL3, ASH2L, RBBP5, WDR5, NCOA6, DPY30, KDM6A (or KDM6B), PAXIP1/PTIP, PAGR1 and alpha- and beta-tubulin. Interacts with TLE1. Interacts with SUPT6H. Interacts with SMARCA4. Interacts with PROSER1. L-ascorbate is required as a cofactor. It depends on Fe(2+) as a cofactor. Expressed in brain, heart and spleen.

It localises to the nucleus. The catalysed reaction is N(6),N(6),N(6)-trimethyl-L-lysyl(27)-[histone H3] + 2 2-oxoglutarate + 2 O2 = N(6)-methyl-L-lysyl(27)-[histone H3] + 2 formaldehyde + 2 succinate + 2 CO2. In terms of biological role, histone demethylase that specifically demethylates 'Lys-27' of histone H3, thereby playing a central role in histone code. Demethylates trimethylated and dimethylated but not monomethylated H3 'Lys-27'. Plays a central role in regulation of posterior development, by regulating HOX gene expression. Demethylation of 'Lys-27' of histone H3 is concomitant with methylation of 'Lys-4' of histone H3, and regulates the recruitment of the PRC1 complex and monoubiquitination of histone H2A. Plays a demethylase-independent role in chromatin remodeling to regulate T-box family member-dependent gene expression. In Mus musculus (Mouse), this protein is Lysine-specific demethylase 6A (Kdm6a).